The sequence spans 466 residues: Ras GTPase-activating protein-binding protein 1 (466 aa).

Residues 11–133 enclose the NTF2 domain; that stretch reads VGREFVRQYY…FYVHNDIFRY (123 aa). Residues K36, K50, K59, K64, K76, and K123 each participate in a glycyl lysine isopeptide (Lys-Gly) (interchain with G-Cter in ubiquitin) cross-link. The interval 142–225 is acidic disordered region; it reads VTEPQEESEE…EPVLEETAPE (84 aa). A Phosphothreonine modification is found at T143. Disordered stretches follow at residues 144-172 and 184-243; these read EPQE…DSGT and EEHL…QTVQ. Composition is skewed to acidic residues over residues 145 to 157 and 185 to 206; these read PQEE…EEPE and EHLE…EQEP. Residue S149 is modified to Phosphoserine. S231, S232, S250, and S253 each carry phosphoserine. A disordered region spans residues 255–329; it reads TSKNLPPSGA…REAGEQGDIE (75 aa). Basic and acidic residues-rich tracts occupy residues 297 to 307 and 318 to 329; these read PQRDQRVREQR and PIREAGEQGDIE. One can recognise an RRM domain in the interval 340–415; sequence HQLFIGNLPH…VRLNVEEKKT (76 aa). Glycyl lysine isopeptide (Lys-Gly) (interchain with G-Cter in ubiquitin) cross-links involve residues K353 and K357. Residue S373 is modified to Phosphoserine. K376 is covalently cross-linked (Glycyl lysine isopeptide (Lys-Gly) (interchain with G-Cter in ubiquitin)). An N6-acetyllysine; alternate modification is found at K376. K376 is covalently cross-linked (Glycyl lysine isopeptide (Lys-Gly) (interchain with G-Cter in SUMO2); alternate). A Glycyl lysine isopeptide (Lys-Gly) (interchain with G-Cter in ubiquitin); alternate cross-link involves residue K393. The interval 410–466 is RG-rich region; sequence VEEKKTRAAREGDRRDNRLRGPGGPRGGLGGGMRGPPRGGMVQKPGFGVGRGLAPRQ. Over residues 413–428 the composition is skewed to basic and acidic residues; it reads KKTRAAREGDRRDNRL. Positions 413–466 are disordered; that stretch reads KKTRAAREGDRRDNRLRGPGGPRGGLGGGMRGPPRGGMVQKPGFGVGRGLAPRQ. The residue at position 429 (R429) is an Asymmetric dimethylarginine. Over residues 430-447 the composition is skewed to gly residues; the sequence is GPGGPRGGLGGGMRGPPR. R435 bears the Asymmetric dimethylarginine; alternate mark. R435 carries the post-translational modification Dimethylated arginine; alternate. R435 is subject to Omega-N-methylarginine; alternate. R447 bears the Omega-N-methylarginine mark. Position 460 is a dimethylated arginine; alternate (R460). R460 is subject to Omega-N-methylarginine; alternate. Residue R465 is modified to Omega-N-methylarginine.

In terms of assembly, homodimer and oligomer. Component of a TAU mRNP complex, at least composed of IGF2BP1, ELAVL4 and G3BP1. Binds to the SH3 domain of Ras GTPase-activating protein (RASA1) in proliferating cells. No interaction in quiescent cells. Interacts (via NTF2 domain) with USP10; inhibiting stress granule formation by lowering G3BP1 valence. Interacts (via NTF2 domain) with CAPRIN1; promoting stress granule formation by lowering the saturation-concentration of G3BP1. Interacts (via NTF2 domain) with UBAP2L; promoting stress granule formation. Associates (via RG-rich region) with 40S ribosome subunits. Interacts with RPTOR and SPAG5; this complex is increased by oxidative stress. Interacts with ATXN2L. Interacts with STYXL1. Interacts with CGAS (via N-terminus); this interaction promotes the DNA-binding and activation of CGAS. Interacts (via C-terminus) with RIGI. Interacts with PABPC1. Interacts with QKI (isoforms QKI6 and QKI7); directing N(7)-methylguanine-containing mRNAs to stress granules. (Microbial infection) Interacts with Semliki forest virus non-structural protein 3 (via C-terminus); this interaction inhibits the formation of stress granules on viral mRNAs and the nsp3-G3BP1 complexes bind viral RNAs and probably orchestrate the assembly of viral replication complexes. As to quaternary structure, (Microbial infection) Interacts with Chikungunya virus non-structural protein 3 (via C-terminus); this interaction inhibits the formation of stress granules on viral mRNAs and the nsp3-G3BP1 complexes bind viral RNAs and probably orchestrate the assembly of viral replication complexes. In terms of assembly, (Microbial infection) Interacts with Sindbis virus non-structural protein 3 (via C-terminus); this interaction inhibits the formation of stress granules on viral mRNAs and the nsp3-G3BP1 complexes bind viral RNAs and probably orchestrate the assembly of viral replication complexes. (Microbial infection) Interacts with Zika virus capsid protein C; this interaction is probably linked to the inhibition of stress granules formation by the virus. As to quaternary structure, (Microbial infection) Interacts with reovirus type 2 protein sigma-NS; this interaction induces the relocalization of G3BP1 to the outer periphery of sigma-NS/mu-Ns viral factories and is probably involved in the suppression of the integrated stress response by the virus. In terms of assembly, (Microbial infection) Interacts with SARS-CoV-2 N protein; the interaction is enhanced by host HDAC6 which deacetylates the viral N protein and promotes N protein association with G3BP1, disrupting stress granule formation and facilitating viral replication. Interacts with HDAC6; the interaction increases during SARS-CoV-2 infection. Requires Mg(2+) as cofactor. Phosphorylation of the acidic disordered region regulates stress granule assembly. RASA1-dependent phosphorylation of Ser-149 induces a conformational change that prevents self-association. Dephosphorylation after HRAS activation is required for stress granule assembly. Ser-149 phosphorylation induces partial nuclear localization. In terms of processing, ubiquitinated by TRIM21 via 'Lys-63'-linked polyubiquitination in the NTF2 domain in response to heat shock, leading to stress granule disassembly: ubiquitination promotes interaction with the FAF2 adapter, followed by interaction with VCP, which extracts G3BP1 from stress granules, leading to stress granule disassembly. In case of prolonged stress, ubiquitination by TRIM21 leads to autophagy-dependent degradation of G3BP1 via recruitment of ubiquitinated G3BP1 by SQSTM1 and/or CALCOCO2 to autophagosomes. Post-translationally, (Microbial infection) Cleaved by human enterovirus 71; this cleavage induces the disassembly of cytoplasmic stress granules. Cleaved by Foot-and-mouth disease virus; this cleavage suppresses the formation of cytoplasmic stress granules. Arg-435 is dimethylated, probably to asymmetric dimethylarginine. In terms of processing, (Microbial infection) Cleaved by Encephalomyocarditis virus protease 3C; this cleavage suppresses the formation of cytoplasmic stress granules. Ubiquitous.

Its subcellular location is the cytoplasm. The protein resides in the cytosol. It is found in the perikaryon. It localises to the stress granule. The protein localises to the nucleus. The catalysed reaction is ATP + H2O = ADP + phosphate + H(+). Its activity is regulated as follows. Under physiological conditions, G3BP1 adopts a compact state that is stabilized by intramolecular interactions between the RG-rich and the acidic regions that inhibit phase separation. Upon stress, polysomes disassemble and mRNAs are released in an unfolded protein-free state. Binding of unfolded mRNA to G3BP1 outcompetes the intramolecular interactions and RNA-bound G3BP1 adopts an expanded conformation in which the RG-rich region becomes exposed to engage in protein-protein and protein-RNA interactions, allowing physical cross-linking of RNA molecules to form protein-RNA condensates, leading to liquid-liquid phase separation (LLPS). Its function is as follows. Protein involved in various processes, such as stress granule formation and innate immunity. Plays an essential role in stress granule formation. Stress granules are membraneless compartments that store mRNAs and proteins, such as stalled translation pre-initiation complexes, in response to stress. Promotes formation of stress granules phase-separated membraneless compartment by undergoing liquid-liquid phase separation (LLPS) upon unfolded RNA-binding: functions as a molecular switch that triggers RNA-dependent LLPS in response to a rise in intracellular free RNA concentrations. Also acts as an ATP- and magnesium-dependent helicase: unwinds DNA/DNA, RNA/DNA, and RNA/RNA substrates with comparable efficiency. Acts unidirectionally by moving in the 5' to 3' direction along the bound single-stranded DNA. Unwinds preferentially partial DNA and RNA duplexes having a 17 bp annealed portion and either a hanging 3' tail or hanging tails at both 5'- and 3'-ends. Plays an essential role in innate immunity by promoting CGAS and RIGI activity. Participates in the DNA-triggered cGAS/STING pathway by promoting the DNA binding and activation of CGAS. Triggers the condensation of cGAS, a process probably linked to the formation of membrane-less organelles. Also enhances RIGI-induced type I interferon production probably by helping RIGI at sensing pathogenic RNA. May also act as a phosphorylation-dependent sequence-specific endoribonuclease in vitro: Cleaves exclusively between cytosine and adenine and cleaves MYC mRNA preferentially at the 3'-UTR. The polypeptide is Ras GTPase-activating protein-binding protein 1 (Homo sapiens (Human)).